A 152-amino-acid chain; its full sequence is Protein NrdI (152 aa).

It belongs to the NrdI family.

Its function is as follows. Probably involved in ribonucleotide reductase function. This is Protein NrdI from Mycobacterium sp. (strain JLS).